A 176-amino-acid polypeptide reads, in one-letter code: MVEEVVRRLDIPDGVDVQISGRSVRVKGPKGELSRELWYPDIEIKREDSKILIRSVARKKQHLAMVGTIAAHIKNMIRGVTDGFEYRMRVVYSHFPIQVKVADGKVAISNFLGERKPRFATIVGDVNVEVGKDEILIRGMDKEAVGQTMANIEQATRVRGFDVRIFQDGIYLVEKR.

Belongs to the universal ribosomal protein uL6 family. Part of the 50S ribosomal subunit.

This protein binds to the 23S rRNA, and is important in its secondary structure. It is located near the subunit interface in the base of the L7/L12 stalk, and near the tRNA binding site of the peptidyltransferase center. The polypeptide is Large ribosomal subunit protein uL6 (Methanothrix thermoacetophila (strain DSM 6194 / JCM 14653 / NBRC 101360 / PT) (Methanosaeta thermophila)).